The sequence spans 425 residues: Histidine--tRNA ligase (425 aa).

The protein belongs to the class-II aminoacyl-tRNA synthetase family. As to quaternary structure, homodimer.

The protein resides in the cytoplasm. The enzyme catalyses tRNA(His) + L-histidine + ATP = L-histidyl-tRNA(His) + AMP + diphosphate + H(+). This chain is Histidine--tRNA ligase, found in Histophilus somni (strain 129Pt) (Haemophilus somnus).